Consider the following 412-residue polypeptide: Tyrosine--tRNA ligase (412 aa).

The 'HIGH' region motif lies at 50–59 (PTGTDIHLGH). Positions 244 to 248 (KMSKS) match the 'KMSKS' region motif. Lys-247 contacts ATP. The 64-residue stretch at 348-411 (VKFFYLLSSL…IGKKIIKRFE (64 aa)) folds into the S4 RNA-binding domain.

This sequence belongs to the class-I aminoacyl-tRNA synthetase family. TyrS type 2 subfamily. As to quaternary structure, homodimer.

It is found in the cytoplasm. The enzyme catalyses tRNA(Tyr) + L-tyrosine + ATP = L-tyrosyl-tRNA(Tyr) + AMP + diphosphate + H(+). Catalyzes the attachment of tyrosine to tRNA(Tyr) in a two-step reaction: tyrosine is first activated by ATP to form Tyr-AMP and then transferred to the acceptor end of tRNA(Tyr). The protein is Tyrosine--tRNA ligase of Prochlorococcus marinus (strain MIT 9312).